We begin with the raw amino-acid sequence, 190 residues long: Holliday junction branch migration complex subunit RuvA (190 aa).

The tract at residues 1-64 (MIGRISGQLA…EDAQILYGFG (64 aa)) is domain I. The interval 65 to 137 (SATERAAFRQ…LKGKLGADIG (73 aa)) is domain II. The segment at 137–141 (GVQVS) is flexible linker. The domain III stretch occupies residues 142-190 (VSSDSQSDILQALVALGYSDRDAALALKALPKDIGVSDGIKLALKALAK).

It belongs to the RuvA family. In terms of assembly, homotetramer. Forms an RuvA(8)-RuvB(12)-Holliday junction (HJ) complex. HJ DNA is sandwiched between 2 RuvA tetramers; dsDNA enters through RuvA and exits via RuvB. An RuvB hexamer assembles on each DNA strand where it exits the tetramer. Each RuvB hexamer is contacted by two RuvA subunits (via domain III) on 2 adjacent RuvB subunits; this complex drives branch migration. In the full resolvosome a probable DNA-RuvA(4)-RuvB(12)-RuvC(2) complex forms which resolves the HJ.

It localises to the cytoplasm. Its function is as follows. The RuvA-RuvB-RuvC complex processes Holliday junction (HJ) DNA during genetic recombination and DNA repair, while the RuvA-RuvB complex plays an important role in the rescue of blocked DNA replication forks via replication fork reversal (RFR). RuvA specifically binds to HJ cruciform DNA, conferring on it an open structure. The RuvB hexamer acts as an ATP-dependent pump, pulling dsDNA into and through the RuvAB complex. HJ branch migration allows RuvC to scan DNA until it finds its consensus sequence, where it cleaves and resolves the cruciform DNA. In Polaromonas sp. (strain JS666 / ATCC BAA-500), this protein is Holliday junction branch migration complex subunit RuvA.